A 473-amino-acid polypeptide reads, in one-letter code: MFS transporter prlG (473 aa).

The span at 1 to 12 shows a compositional bias: basic and acidic residues; it reads MSSTDAEAKNEE. A disordered region spans residues 1–27; the sequence is MSSTDAEAKNEEAVDWEGPDDPENPRN. Residues 13 to 22 show a composition bias toward acidic residues; the sequence is AVDWEGPDDP. Transmembrane regions (helical) follow at residues 37–57, 71–91, 101–121, 125–145, 163–183, 191–211, 266–286, 305–325, 345–365, 372–392, and 409–429; these read VLLVSSFTLYSNLAAVMFAPG, IVASLTVSIYILGYVFGPFLL, LIIYHICNAVYIAFTIGCALS, AMFLVFRFICGCAASAPMAIG, ALFGLGPLLGPVIGPVVGGFV, WTFWLVLILAGVVSLLALVLM, PIVFLLSVYCAFMFGLTYLLF, GLAYLGLGVGMIISIGLFAVL, LILMIWSSPLVPIGFFWYGWS, WIVPILGTSVIGLGAFLILMP, and ALAANTVLRSLFGAVLPLAGP.

Belongs to the major facilitator superfamily.

The protein resides in the cell membrane. Functionally, efflux pump that might be required for efficient secretion of pyrrolocin or other secondary metabolies produced by the pyrrolocin gene cluster. The chain is MFS transporter prlG from Fungal sp. (strain NRRL 50135).